Consider the following 975-residue polypeptide: Glycine dehydrogenase (decarboxylating) (975 aa).

Position 723 is an N6-(pyridoxal phosphate)lysine (Lys-723).

It belongs to the GcvP family. As to quaternary structure, the glycine cleavage system is composed of four proteins: P, T, L and H. Pyridoxal 5'-phosphate is required as a cofactor.

The catalysed reaction is N(6)-[(R)-lipoyl]-L-lysyl-[glycine-cleavage complex H protein] + glycine + H(+) = N(6)-[(R)-S(8)-aminomethyldihydrolipoyl]-L-lysyl-[glycine-cleavage complex H protein] + CO2. Its function is as follows. The glycine cleavage system catalyzes the degradation of glycine. The P protein binds the alpha-amino group of glycine through its pyridoxal phosphate cofactor; CO(2) is released and the remaining methylamine moiety is then transferred to the lipoamide cofactor of the H protein. This chain is Glycine dehydrogenase (decarboxylating), found in Burkholderia pseudomallei (strain 668).